We begin with the raw amino-acid sequence, 877 residues long: SRP-independent targeting protein 1 (877 aa).

S309, S310, S311, S332, and S334 each carry phosphoserine. Disordered regions lie at residues 369–414 (LRKQ…PSND), 446–521 (DDYT…DVLS), and 550–579 (KPFN…SNHF). The span at 389–402 (RSQSYSSSNMSRSP) shows a compositional bias: low complexity. Residues 412 to 441 (SNDELVYDELNNQINEVQDRAKNEEIVLYN) are a coiled coil. The span at 447–462 (DYTKERGEQEQDRTSY) shows a compositional bias: basic and acidic residues. The span at 470–501 (YDDEEGGNEDNYDDDEDDDDDDDDDDESDDEG) shows a compositional bias: acidic residues. Composition is skewed to polar residues over residues 510–521 (LSRSGSSTDVLS) and 551–579 (PFNQ…SNHF). Residues K668 and K670 each participate in a glycyl lysine isopeptide (Lys-Gly) (interchain with G-Cter in ubiquitin) cross-link. A phosphoserine mark is found at S692, S694, and S706. The interval 773–815 (SLPKEREDDNDSTNSTIVPNHPDNDNYNDNDNDNNTGINSNNF) is disordered. Over residues 805 to 815 (DNNTGINSNNF) the composition is skewed to low complexity. Residue S841 is modified to Phosphoserine.

In terms of assembly, interacts with ENV10/SND2.

Its subcellular location is the cytoplasm. Functionally, functions in the SND pathway, a SRP (signal recognition particle) and GET (guided entry of tail-anchored proteins) independent pathway for targeting a broad range of substrate proteins to the endoplasmic reticulum. SND functions in parallel to GET in targeting proteins with downstream hydrophobic motifs. The sequence is that of SRP-independent targeting protein 1 from Saccharomyces cerevisiae (strain ATCC 204508 / S288c) (Baker's yeast).